The primary structure comprises 334 residues: N-acetyl-gamma-glutamyl-phosphate reductase (334 aa).

Residue cysteine 154 is part of the active site.

Belongs to the NAGSA dehydrogenase family. Type 1 subfamily.

It localises to the cytoplasm. It carries out the reaction N-acetyl-L-glutamate 5-semialdehyde + phosphate + NADP(+) = N-acetyl-L-glutamyl 5-phosphate + NADPH + H(+). It functions in the pathway amino-acid biosynthesis; L-arginine biosynthesis; N(2)-acetyl-L-ornithine from L-glutamate: step 3/4. Catalyzes the NADPH-dependent reduction of N-acetyl-5-glutamyl phosphate to yield N-acetyl-L-glutamate 5-semialdehyde. In Shigella flexneri, this protein is N-acetyl-gamma-glutamyl-phosphate reductase.